A 141-amino-acid polypeptide reads, in one-letter code: Hemoglobin subunit alpha (141 aa).

Positions 1–141 (VLSSADKANI…VSTVLTSKYR (141 aa)) constitute a Globin domain. The residue at position 3 (serine 3) is a Phosphoserine. Residues lysine 7 and lysine 11 each carry the N6-succinyllysine modification. An N6-acetyllysine; alternate modification is found at lysine 16. The residue at position 16 (lysine 16) is an N6-succinyllysine; alternate. Tyrosine 24 carries the post-translational modification Phosphotyrosine. Lysine 40 carries the N6-succinyllysine modification. Phosphoserine is present on serine 49. Histidine 58 contributes to the O2 binding site. Histidine 87 contributes to the heme b binding site. Serine 102 carries the phosphoserine modification. Threonine 108 is subject to Phosphothreonine. Serine 131 carries the post-translational modification Phosphoserine. Residues threonine 134 and threonine 137 each carry the phosphothreonine modification. The residue at position 138 (serine 138) is a Phosphoserine.

Belongs to the globin family. In terms of assembly, heterotetramer of two alpha chains and two beta chains. As to expression, red blood cells.

In terms of biological role, involved in oxygen transport from the lung to the various peripheral tissues. Its function is as follows. Hemopressin acts as an antagonist peptide of the cannabinoid receptor CNR1. Hemopressin-binding efficiently blocks cannabinoid receptor CNR1 and subsequent signaling. In Crocuta crocuta (Spotted hyena), this protein is Hemoglobin subunit alpha (HBA).